The following is a 740-amino-acid chain: ATP-dependent DNA helicase Hel308 (740 aa).

ATP contacts are provided by residues Gln28 and 46–53 (IPTASGKT). Positions 33–204 (RQGLLDGKNL…WMDAALVQSE (172 aa)) constitute a Helicase ATP-binding domain. The DEAH box signature appears at 149 to 152 (DEVH). The region spanning 236 to 436 (EVNSLVADTL…EPAMRAHALS (201 aa)) is the Helicase C-terminal domain. Positions 716–740 (VDHTPPETEEQPQVSGQSTLFSFDG) are disordered. The segment covering 726–740 (QPQVSGQSTLFSFDG) has biased composition (polar residues).

This sequence belongs to the helicase family. Hel308 subfamily. Monomer.

The enzyme catalyses Couples ATP hydrolysis with the unwinding of duplex DNA by translocating in the 3'-5' direction.. The catalysed reaction is ATP + H2O = ADP + phosphate + H(+). Its function is as follows. DNA-dependent ATPase and 3'-5' DNA helicase that may be involved in repair of stalled replication forks. In Methanocella arvoryzae (strain DSM 22066 / NBRC 105507 / MRE50), this protein is ATP-dependent DNA helicase Hel308.